Consider the following 417-residue polypeptide: Serine hydroxymethyltransferase (417 aa).

(6S)-5,6,7,8-tetrahydrofolate is bound by residues Leu-121 and 125 to 127 (GHL). The residue at position 229 (Lys-229) is an N6-(pyridoxal phosphate)lysine. Residue 355-357 (SPF) coordinates (6S)-5,6,7,8-tetrahydrofolate.

This sequence belongs to the SHMT family. In terms of assembly, homodimer. Requires pyridoxal 5'-phosphate as cofactor.

It localises to the cytoplasm. It carries out the reaction (6R)-5,10-methylene-5,6,7,8-tetrahydrofolate + glycine + H2O = (6S)-5,6,7,8-tetrahydrofolate + L-serine. Its pathway is one-carbon metabolism; tetrahydrofolate interconversion. It participates in amino-acid biosynthesis; glycine biosynthesis; glycine from L-serine: step 1/1. Its function is as follows. Catalyzes the reversible interconversion of serine and glycine with tetrahydrofolate (THF) serving as the one-carbon carrier. This reaction serves as the major source of one-carbon groups required for the biosynthesis of purines, thymidylate, methionine, and other important biomolecules. Also exhibits THF-independent aldolase activity toward beta-hydroxyamino acids, producing glycine and aldehydes, via a retro-aldol mechanism. This is Serine hydroxymethyltransferase from Buchnera aphidicola subsp. Acyrthosiphon pisum (strain APS) (Acyrthosiphon pisum symbiotic bacterium).